The primary structure comprises 197 residues: Thymidylate kinase (197 aa).

ATP is bound at residue 7–14; sequence GIDGSGKS.

Belongs to the thymidylate kinase family.

The catalysed reaction is dTMP + ATP = dTDP + ADP. In terms of biological role, phosphorylation of dTMP to form dTDP in both de novo and salvage pathways of dTTP synthesis. The polypeptide is Thymidylate kinase (tmk) (Thermotoga maritima (strain ATCC 43589 / DSM 3109 / JCM 10099 / NBRC 100826 / MSB8)).